We begin with the raw amino-acid sequence, 106 residues long: Small ribosomal subunit protein mS33 (106 aa).

Residue Ser-2 is modified to N-acetylserine. The interval 81–106 is disordered; sequence EQRRLKKLRGKGKPRKGEGKRATKKK. Residues 84–94 show a composition bias toward basic residues; the sequence is RLKKLRGKGKP. A compositionally biased stretch (basic and acidic residues) spans 95 to 106; the sequence is RKGEGKRATKKK.

This sequence belongs to the mitochondrion-specific ribosomal protein mS33 family. As to quaternary structure, component of the mitochondrial ribosome small subunit (28S) which comprises a 12S rRNA and about 30 distinct proteins.

The protein localises to the mitochondrion. This is Small ribosomal subunit protein mS33 (Mrps33) from Mus musculus (Mouse).